Reading from the N-terminus, the 328-residue chain is RING finger protein 175 (328 aa).

5 helical membrane-spanning segments follow: residues 51–71 (MHVE…IVLV), 83–103 (LVTL…LYWW), 104–121 (RFLS…YILF), 149–169 (AFGV…NLFF), and 180–200 (GIVS…FAEI). The RING-type; atypical zinc finger occupies 227-277 (CAVCGQKIIVELDEEGLIENTYQLSCNHVFHEFCIRGWCIVGKKQTCPYCK).

It localises to the membrane. In Homo sapiens (Human), this protein is RING finger protein 175 (RNF175).